The primary structure comprises 194 residues: MRKATIERKTGETQISLTFAVDGEGQSNLTTGVPFMTHMLDLFTKHGHFNLTIDAKGDTEVDDHHTTEDLGICLGLALKEALADKKGIRRYGSAFVPMDETLAQVVVDLSNRPHLEFRADMPSEKVGTFDTELVHEFLWKLALEARMNLHVIVHYGENTHHIIEAIFKALARALDEATTIDPRVKGVPSTKGML.

It belongs to the imidazoleglycerol-phosphate dehydratase family.

It is found in the cytoplasm. The enzyme catalyses D-erythro-1-(imidazol-4-yl)glycerol 3-phosphate = 3-(imidazol-4-yl)-2-oxopropyl phosphate + H2O. It participates in amino-acid biosynthesis; L-histidine biosynthesis; L-histidine from 5-phospho-alpha-D-ribose 1-diphosphate: step 6/9. The protein is Imidazoleglycerol-phosphate dehydratase of Halalkalibacterium halodurans (strain ATCC BAA-125 / DSM 18197 / FERM 7344 / JCM 9153 / C-125) (Bacillus halodurans).